The primary structure comprises 483 residues: Glutamyl-tRNA(Gln) amidotransferase subunit A (483 aa).

Catalysis depends on charge relay system residues K76 and S151. S175 serves as the catalytic Acyl-ester intermediate.

Belongs to the amidase family. GatA subfamily. In terms of assembly, heterotrimer of A, B and C subunits.

It carries out the reaction L-glutamyl-tRNA(Gln) + L-glutamine + ATP + H2O = L-glutaminyl-tRNA(Gln) + L-glutamate + ADP + phosphate + H(+). Its function is as follows. Allows the formation of correctly charged Gln-tRNA(Gln) through the transamidation of misacylated Glu-tRNA(Gln) in organisms which lack glutaminyl-tRNA synthetase. The reaction takes place in the presence of glutamine and ATP through an activated gamma-phospho-Glu-tRNA(Gln). The polypeptide is Glutamyl-tRNA(Gln) amidotransferase subunit A (Nitrosospira multiformis (strain ATCC 25196 / NCIMB 11849 / C 71)).